The sequence spans 201 residues: Acyl-homoserine-lactone synthase (201 aa).

Belongs to the autoinducer synthase family.

It carries out the reaction a fatty acyl-[ACP] + S-adenosyl-L-methionine = an N-acyl-L-homoserine lactone + S-methyl-5'-thioadenosine + holo-[ACP] + H(+). Functionally, required for the synthesis of BHL (N-butanoyl-L-homoserine lactone), and HHL (N-hexanoyl-L-homoserine lactone) autoinducer molecules which bind to RhlR and thus acts in elastase biosynthesis regulation. The protein is Acyl-homoserine-lactone synthase (rhlI) of Pseudomonas aeruginosa (strain ATCC 15692 / DSM 22644 / CIP 104116 / JCM 14847 / LMG 12228 / 1C / PRS 101 / PAO1).